A 323-amino-acid chain; its full sequence is Apolipoprotein E (323 aa).

A signal peptide spans Met1–Ala18. 8 repeat units span residues Ala86–Gly107, Pro108–Arg129, Ser130–Gly151, Gln152–Leu173, Arg174–Glu195, Arg196–Ala217, Lys218–Arg239, and Gly240–Gln261. The 8 X 22 AA approximate tandem repeats stretch occupies residues Ala86–Gln261. Position 149 is a methionine sulfoxide (Met149). A Phosphoserine modification is found at Ser153. An LDL and other lipoprotein receptors binding region spans residues His164–Arg174. Leu168–Arg171 provides a ligand contact to heparin. The interval Asn216–Met296 is lipid-binding and lipoprotein association. Gly235–Leu242 is a binding site for heparin. A homooligomerization region spans residues Asp272 to Pro323. Residues Arg284–Met296 are specificity for association with VLDL.

Belongs to the apolipoprotein A1/A4/E family. As to quaternary structure, homotetramer. May interact with ABCA1; functionally associated with ABCA1 in the biogenesis of HDLs. May interact with APP/A4 amyloid-beta peptide; the interaction is extremely stable in vitro but its physiological significance is unclear. May interact with MAPT. May interact with MAP2. In the cerebrospinal fluid, interacts with secreted SORL1. Interacts with PMEL; this allows the loading of PMEL luminal fragment on ILVs to induce fibril nucleation. Post-translationally, APOE exists as multiple glycosylated and sialylated glycoforms within cells and in plasma. The extent of glycosylation and sialylation are tissue and context specific. Glycated in plasma VLDL. In terms of processing, phosphorylated by FAM20C in the extracellular medium.

The protein resides in the secreted. Its subcellular location is the extracellular space. It localises to the extracellular matrix. It is found in the extracellular vesicle. The protein localises to the endosome. The protein resides in the multivesicular body. Its function is as follows. APOE is an apolipoprotein, a protein associating with lipid particles, that mainly functions in lipoprotein-mediated lipid transport between organs via the plasma and interstitial fluids. APOE is a core component of plasma lipoproteins and is involved in their production, conversion and clearance. Apolipoproteins are amphipathic molecules that interact both with lipids of the lipoprotein particle core and the aqueous environment of the plasma. As such, APOE associates with chylomicrons, chylomicron remnants, very low density lipoproteins (VLDL) and intermediate density lipoproteins (IDL) but shows a preferential binding to high-density lipoproteins (HDL). It also binds a wide range of cellular receptors including the LDL receptor/LDLR and the very low-density lipoprotein receptor/VLDLR that mediate the cellular uptake of the APOE-containing lipoprotein particles. Finally, APOE also has a heparin-binding activity and binds heparan-sulfate proteoglycans on the surface of cells, a property that supports the capture and the receptor-mediated uptake of APOE-containing lipoproteins by cells. This chain is Apolipoprotein E (APOE), found in Canis lupus familiaris (Dog).